A 290-amino-acid chain; its full sequence is ATP synthase gamma chain (290 aa).

This sequence belongs to the ATPase gamma chain family. In terms of assembly, F-type ATPases have 2 components, CF(1) - the catalytic core - and CF(0) - the membrane proton channel. CF(1) has five subunits: alpha(3), beta(3), gamma(1), delta(1), epsilon(1). CF(0) has three main subunits: a, b and c.

The protein resides in the cell membrane. Its function is as follows. Produces ATP from ADP in the presence of a proton gradient across the membrane. The gamma chain is believed to be important in regulating ATPase activity and the flow of protons through the CF(0) complex. The polypeptide is ATP synthase gamma chain (Heliobacterium modesticaldum (strain ATCC 51547 / Ice1)).